Consider the following 217-residue polypeptide: MSNPFLKQVFNKDKTFRPKRKFEPGTQRFELHKRAQASLNAGLDLRLAVQLPPGEDLNDWVAVHVVDFFNRINLIYGTISDGCTEQSCPVMSGGPKYEYRWQDEQRFRKPTALSAPRYMDLLMDWIEVQINNEDIFPTNVGTPFPKTFLQAVRKILSRLFRVFVHVYIHHFDRIAQMGSEAHVNTCYKHFYYFVTEFNLIDPKELEPLKEMTSRMCH.

The Zn(2+) site is built by Cys-83, Cys-88, His-165, and His-170.

Belongs to the MOB1/phocein family.

Functionally, may regulate the activity of kinases. This is MOB kinase activator 3A (Mob3a) from Mus musculus (Mouse).